The sequence spans 273 residues: Elongation factor Ts (273 aa).

The segment at 80-83 is involved in Mg(2+) ion dislocation from EF-Tu; it reads TDFV.

Belongs to the EF-Ts family.

The protein resides in the cytoplasm. In terms of biological role, associates with the EF-Tu.GDP complex and induces the exchange of GDP to GTP. It remains bound to the aminoacyl-tRNA.EF-Tu.GTP complex up to the GTP hydrolysis stage on the ribosome. This chain is Elongation factor Ts, found in Tropheryma whipplei (strain Twist) (Whipple's bacillus).